A 457-amino-acid polypeptide reads, in one-letter code: Cysteine--tRNA ligase (457 aa).

C28 contributes to the Zn(2+) binding site. Positions 30 to 40 (PTVYDTAHIGN) match the 'HIGH' region motif. Zn(2+) contacts are provided by C212, H237, and E241. Positions 270–274 (KMSKS) match the 'KMSKS' region motif. K273 lines the ATP pocket.

This sequence belongs to the class-I aminoacyl-tRNA synthetase family. As to quaternary structure, monomer. Zn(2+) serves as cofactor.

Its subcellular location is the cytoplasm. It carries out the reaction tRNA(Cys) + L-cysteine + ATP = L-cysteinyl-tRNA(Cys) + AMP + diphosphate. The chain is Cysteine--tRNA ligase from Wolbachia sp. subsp. Drosophila simulans (strain wRi).